The following is a 138-amino-acid chain: Small ribosomal subunit protein uS11c (138 aa).

The interval 1–21 (MAKSIPKIGSRKTGRIGSRKH) is disordered. Over residues 9–21 (GSRKTGRIGSRKH) the composition is skewed to basic residues.

The protein belongs to the universal ribosomal protein uS11 family. Part of the 30S ribosomal subunit.

It is found in the plastid. It localises to the chloroplast. The protein is Small ribosomal subunit protein uS11c of Pisum sativum (Garden pea).